Consider the following 229-residue polypeptide: Urease accessory protein UreF (229 aa).

This sequence belongs to the UreF family. As to quaternary structure, ureD, UreF and UreG form a complex that acts as a GTP-hydrolysis-dependent molecular chaperone, activating the urease apoprotein by helping to assemble the nickel containing metallocenter of UreC. The UreE protein probably delivers the nickel.

It is found in the cytoplasm. Its function is as follows. Required for maturation of urease via the functional incorporation of the urease nickel metallocenter. In Alcanivorax borkumensis (strain ATCC 700651 / DSM 11573 / NCIMB 13689 / SK2), this protein is Urease accessory protein UreF.